The chain runs to 743 residues: Merozoite surface protein 9 (743 aa).

The N-terminal stretch at 1–23 (MMNMKIVLFSLLLFVIRWNIISC) is a signal peptide. The segment at 77–235 (KELLKEKQYT…VNDEDDVNDE (159 aa)) is interaction with MSP1 and host SLC4A1/Band 3. 4 disordered regions span residues 202 to 282 (KSQG…ATAY), 459 to 487 (DNQA…PTED), 512 to 540 (NNTP…ENFD), and 666 to 743 (VDAL…EESK). Polar residues predominate over residues 211-224 (SQNQNENNDNQKYQ). 8 consecutive repeat copies span residues 226-231 (VNDEDD), 232-237 (VNDEED), 238-243 (TNDDED), 244-249 (TNDEED), 250-255 (TNDDED), 256-261 (TNDDED), 262-267 (TNDEED), and 268-273 (TNDEED). Positions 226–273 (VNDEDDVNDEEDTNDDEDTNDEEDTNDDEDTNDDEDTNDEEDTNDEED) are 8 X 6 AA tandem repeats of [VT]-N-D-[ED]-[ED]-D. Residues 226–274 (VNDEDDVNDEEDTNDDEDTNDEEDTNDDEDTNDDEDTNDEEDTNDEEDH) show a composition bias toward acidic residues. The segment at 364-528 (LKDNLINYEF…PPTQSKKKNK (165 aa)) is interaction with MSP1 and host SLC4A1/Band 3. Basic and acidic residues predominate over residues 459–473 (DNQAVDTKSMEEPKV). A compositionally biased stretch (low complexity) spans 512-521 (NNTPNVVPPT). The stretch at 644 to 733 (NQETEEEMEK…QEEEEEEEIV (90 aa)) forms a coiled coil. Basic and acidic residues predominate over residues 672-721 (KNKEEEEKEKEKEEKEKEEKEKEKEEKEKEEKEKEEKEKEEKEEEKKEKE). A compositionally biased stretch (acidic residues) spans 722-733 (EEQEEEEEEEIV).

It belongs to the plasmodium ABRA family. Forms a complex composed of MSP1, MSP6, MSP7, MSP9 and MSP3; within the complex, MSP6 and MSP9 mediate the binding to the host erythrocyte. Interacts with MSP1 subunits p19 and p42; the interaction is direct. Interacts with host SLC4A1/Band 3 protein (via the 5ABC region). MSP1 subunits p19 or p42, and MSP9 form a co-ligand complex that interacts with host SLC4A1/Band 3 protein. Post-translationally, not glycosylated.

The protein localises to the cell membrane. The protein resides in the parasitophorous vacuole lumen. Its subcellular location is the secreted. In terms of biological role, during the asexual blood stage, involved in the sialic acid-independent (SAID) merozoite invasion of host erythrocytes by binding to host SLC4A1/Band 3 protein on the surface of the host erythrocyte. The protein is Merozoite surface protein 9 of Plasmodium falciparum (isolate 3D7).